The sequence spans 156 residues: U4/U6.U5 small nuclear ribonucleoprotein 27 kDa protein (156 aa).

The tract at residues 1–98 (MGRSRSRSPE…IAAEDLEGKT (98 aa)) is disordered. A compositionally biased stretch (basic residues) spans 13-59 (RERRRSRSASRERERRRRERSRSRERRRSRSRSPHRRRSRSPRRHRS). Residues 66-98 (RLKDRRDDDKKDSKESKGAKERQIAAEDLEGKT) are compositionally biased toward basic and acidic residues.

The protein belongs to the SNUT3 family. As to quaternary structure, part of a tri-snRNP complex.

The protein localises to the nucleus. Functionally, may play a role in mRNA splicing. The sequence is that of U4/U6.U5 small nuclear ribonucleoprotein 27 kDa protein (snrnp27) from Xenopus tropicalis (Western clawed frog).